The chain runs to 307 residues: Fructose-bisphosphate aldolase (307 aa).

Ser49 is a binding site for D-glyceraldehyde 3-phosphate. The active-site Proton donor is the Asp82. Zn(2+) contacts are provided by His83, Asp104, Glu134, and His180. Gly181 contacts dihydroxyacetone phosphate. His210 is a Zn(2+) binding site. Dihydroxyacetone phosphate-binding positions include 211 to 213 (GAS) and 253 to 256 (NTDT).

The protein belongs to the class II fructose-bisphosphate aldolase family. Homodimer. The cofactor is Zn(2+).

It catalyses the reaction beta-D-fructose 1,6-bisphosphate = D-glyceraldehyde 3-phosphate + dihydroxyacetone phosphate. The protein operates within carbohydrate degradation; glycolysis; D-glyceraldehyde 3-phosphate and glycerone phosphate from D-glucose: step 4/4. In terms of biological role, catalyzes the aldol condensation of dihydroxyacetone phosphate (DHAP or glycerone-phosphate) with glyceraldehyde 3-phosphate (G3P) to form fructose 1,6-bisphosphate (FBP) in gluconeogenesis and the reverse reaction in glycolysis. This chain is Fructose-bisphosphate aldolase (fba), found in Helicobacter pylori (strain J99 / ATCC 700824) (Campylobacter pylori J99).